The following is a 257-amino-acid chain: uncharacterized protein (257 aa).

The first 22 residues, 1 to 22, serve as a signal peptide directing secretion; the sequence is MIHSKRLKMCLCLIILSVFIGA. Cys23 is lipidated: N-palmitoyl cysteine. A lipid anchor (S-diacylglycerol cysteine) is attached at Cys23.

Belongs to the staphylococcal tandem lipoprotein family.

Its subcellular location is the cell membrane. This is an uncharacterized protein from Staphylococcus aureus (strain MRSA252).